The chain runs to 384 residues: 1-deoxy-D-xylulose 5-phosphate reductoisomerase (384 aa).

6 residues coordinate NADPH: threonine 10, glycine 11, serine 12, isoleucine 13, lysine 37, and asparagine 124. Lysine 125 serves as a coordination point for 1-deoxy-D-xylulose 5-phosphate. Residue glutamate 126 participates in NADPH binding. Mn(2+) is bound at residue aspartate 150. 1-deoxy-D-xylulose 5-phosphate is bound by residues serine 151, glutamate 152, serine 176, and histidine 199. Glutamate 152 contributes to the Mn(2+) binding site. NADPH is bound at residue glycine 205. 4 residues coordinate 1-deoxy-D-xylulose 5-phosphate: serine 212, asparagine 217, lysine 218, and glutamate 221. Glutamate 221 is a binding site for Mn(2+).

This sequence belongs to the DXR family. Mg(2+) is required as a cofactor. Mn(2+) serves as cofactor.

It catalyses the reaction 2-C-methyl-D-erythritol 4-phosphate + NADP(+) = 1-deoxy-D-xylulose 5-phosphate + NADPH + H(+). Its pathway is isoprenoid biosynthesis; isopentenyl diphosphate biosynthesis via DXP pathway; isopentenyl diphosphate from 1-deoxy-D-xylulose 5-phosphate: step 1/6. Its function is as follows. Catalyzes the NADPH-dependent rearrangement and reduction of 1-deoxy-D-xylulose-5-phosphate (DXP) to 2-C-methyl-D-erythritol 4-phosphate (MEP). This chain is 1-deoxy-D-xylulose 5-phosphate reductoisomerase, found in Clostridium tetani (strain Massachusetts / E88).